A 388-amino-acid chain; its full sequence is MRYLTAGESHGPRLTAIIEGIPAGLPLTAEDINGDLKRRQGGYGRGGRMKIESDQVVFTSGVRHGKTTGAPITMDVVNKDHQKWLDIMSAEDIEDRLKSKRKITHPRPGHADLVGGIKYRFDDLRNSLERSSARETTMRVAVGAVAKRLLAELDMEIANHVVVFGGKEIDVPENLTVAEIKQRAAQSEVSIVNQEREQEIKDYIDQIKRDGDTIGGVVETVVGGVPVGLGSYVQWDRKLDARLAQAVVSINAFKGVEFGLGFEAGYRKGSQVMDEILWSKEDGYTRRTNNLGGFEGGMTNGQPIVVRGVMKPIPTLYKPLMSVDIETHEPYKATVERSDPTALPAAGMVMEAVVATVLAQEILEKFSSDNLEELKEAVAKYRDYTKNY.

Arg39 and Arg45 together coordinate NADP(+). FMN-binding positions include 130–132 (RSS), 251–252 (NA), Gly296, 311–315 (KPIPT), and Arg337.

It belongs to the chorismate synthase family. As to quaternary structure, homotetramer. Requires FMNH2 as cofactor.

It catalyses the reaction 5-O-(1-carboxyvinyl)-3-phosphoshikimate = chorismate + phosphate. It participates in metabolic intermediate biosynthesis; chorismate biosynthesis; chorismate from D-erythrose 4-phosphate and phosphoenolpyruvate: step 7/7. Catalyzes the anti-1,4-elimination of the C-3 phosphate and the C-6 proR hydrogen from 5-enolpyruvylshikimate-3-phosphate (EPSP) to yield chorismate, which is the branch point compound that serves as the starting substrate for the three terminal pathways of aromatic amino acid biosynthesis. This reaction introduces a second double bond into the aromatic ring system. The sequence is that of Chorismate synthase from Streptococcus pneumoniae (strain ATCC 700669 / Spain 23F-1).